The sequence spans 436 residues: Chromosomal replication initiator protein DnaA (436 aa).

A domain I, interacts with DnaA modulators region spans residues 1 to 69 (MLADEVIELL…ANIFEVKTGI (69 aa)). The segment at 69 to 99 (IKPVISITTQKNRVSIKAKDIDVKQIRTQSS) is domain II. Residues 100–314 (LLNPSYTFES…SAIININAFA (215 aa)) are domain III, AAA+ region. The ATP site is built by Gly-144, Gly-146, Lys-147, and Thr-148. The segment at 315-436 (NIMRQEITLE…ELKNKITSKE (122 aa)) is domain IV, binds dsDNA.

It belongs to the DnaA family. As to quaternary structure, oligomerizes as a right-handed, spiral filament on DNA at oriC.

The protein resides in the cytoplasm. Its function is as follows. Plays an essential role in the initiation and regulation of chromosomal replication. ATP-DnaA binds to the origin of replication (oriC) to initiate formation of the DNA replication initiation complex once per cell cycle. Binds the DnaA box (a 9 base pair repeat at the origin) and separates the double-stranded (ds)DNA. Forms a right-handed helical filament on oriC DNA; dsDNA binds to the exterior of the filament while single-stranded (ss)DNA is stabiized in the filament's interior. The ATP-DnaA-oriC complex binds and stabilizes one strand of the AT-rich DNA unwinding element (DUE), permitting loading of DNA polymerase. After initiation quickly degrades to an ADP-DnaA complex that is not apt for DNA replication. Binds acidic phospholipids. This chain is Chromosomal replication initiator protein DnaA, found in Campylobacter fetus subsp. fetus (strain 82-40).